We begin with the raw amino-acid sequence, 25 residues long: Kunitz-type serine protease inhibitor RsTIS5 (25 aa).

The region spanning 1–25 is the BPTI/Kunitz inhibitor domain; that stretch reads EAEPKPFNPVCYEPKEVGPCKAYVP.

Serine protease inhibitor. Inhibits trypsin, elastase and plasmin. Does not inhibit kallikrein. The protein is Kunitz-type serine protease inhibitor RsTIS5 of Rhipicephalus sanguineus (Brown dog tick).